The chain runs to 350 residues: Ornithine carbamoyltransferase, mitochondrial (350 aa).

Residues 1–30 (MLHHMRTIINASWRYGNKCIVRQFGFSQTY) constitute a mitochondrion transit peptide. Carbamoyl phosphate-binding positions include 86 to 90 (STRTR), Arg137, and His164. Arg137 is a binding site for L-ornithine. L-ornithine is bound by residues Asn195, 259–263 (DTWVS), 298–301 (HCLP), and Arg326. Cys299 is an active-site residue. Arg326 contributes to the carbamoyl phosphate binding site.

This sequence belongs to the aspartate/ornithine carbamoyltransferase superfamily. OTCase family. In terms of assembly, homotrimer. Liver.

Its subcellular location is the mitochondrion matrix. The catalysed reaction is carbamoyl phosphate + L-ornithine = L-citrulline + phosphate + H(+). It functions in the pathway nitrogen metabolism; urea cycle; L-citrulline from L-ornithine and carbamoyl phosphate: step 1/1. Its function is as follows. OTC is necessary for the tadpoles transition from an ammonotelic, aquatic larva to a ureotelic, terrestrial adult. The sequence is that of Ornithine carbamoyltransferase, mitochondrial from Aquarana catesbeiana (American bullfrog).